A 456-amino-acid polypeptide reads, in one-letter code: Argininosuccinate lyase (456 aa).

Belongs to the lyase 1 family. Argininosuccinate lyase subfamily.

The protein resides in the cytoplasm. The catalysed reaction is 2-(N(omega)-L-arginino)succinate = fumarate + L-arginine. It participates in amino-acid biosynthesis; L-arginine biosynthesis; L-arginine from L-ornithine and carbamoyl phosphate: step 3/3. The sequence is that of Argininosuccinate lyase from Shewanella pealeana (strain ATCC 700345 / ANG-SQ1).